Consider the following 477-residue polypeptide: UDP-N-acetylmuramate--L-alanine ligase (477 aa).

ATP is bound at residue 122 to 128 (GTHGKTT).

Belongs to the MurCDEF family.

It localises to the cytoplasm. The enzyme catalyses UDP-N-acetyl-alpha-D-muramate + L-alanine + ATP = UDP-N-acetyl-alpha-D-muramoyl-L-alanine + ADP + phosphate + H(+). The protein operates within cell wall biogenesis; peptidoglycan biosynthesis. Cell wall formation. In Xanthomonas axonopodis pv. citri (strain 306), this protein is UDP-N-acetylmuramate--L-alanine ligase.